We begin with the raw amino-acid sequence, 813 residues long: Probable receptor-like protein kinase At5g39020 (813 aa).

An N-terminal signal peptide occupies residues 1–21; sequence MNCNVLFLLSVLVSVTAGVTA. The Extracellular segment spans residues 22 to 437; the sequence is AYHPTDVFLF…TPPIKGKPHV (416 aa). Residues Asn-46, Asn-61, Asn-165, Asn-202, Asn-213, Asn-263, Asn-286, Asn-293, Asn-384, and Asn-401 are each glycosylated (N-linked (GlcNAc...) asparagine). Residues 438–458 form a helical membrane-spanning segment; it reads LVIILIVVGSVIGLATFIVII. The Cytoplasmic portion of the chain corresponds to 459-813; sequence MLLIRQMKRK…QTQTLDSTII (355 aa). The region spanning 496–771 is the Protein kinase domain; that stretch reads KSFSHTVGKG…KVVEMIEGSL (276 aa). ATP contacts are provided by residues 502-510 and Lys-524; that span reads VGKGGFGTV. Asp-619 serves as the catalytic Proton acceptor. A disordered region spans residues 791-813; sequence ESSSLSDGQEAEKQTQTLDSTII. Polar residues predominate over residues 804 to 813; the sequence is QTQTLDSTII.

Belongs to the protein kinase superfamily. Ser/Thr protein kinase family.

The protein localises to the membrane. This chain is Probable receptor-like protein kinase At5g39020, found in Arabidopsis thaliana (Mouse-ear cress).